The following is a 346-amino-acid chain: Holliday junction branch migration complex subunit RuvB (346 aa).

Residues 2-183 form a large ATPase domain (RuvB-L) region; that stretch reads TDDRIIGAGA…FGIVQRLEFY (182 aa). Residues Ile22, Arg23, Gly64, Lys67, Thr68, Thr69, 130 to 132, Arg173, Tyr183, and Arg220 contribute to the ATP site; that span reads EDF. Residue Thr68 coordinates Mg(2+). The tract at residues 184-254 is small ATPAse domain (RuvB-S); the sequence is SVEELTRIVR…VAQAAMKMLK (71 aa). The segment at 257–346 is head domain (RuvB-H); it reads PEGFDELDRR…DLFAEVPDVG (90 aa). Arg293, Arg312, and Arg317 together coordinate DNA.

Belongs to the RuvB family. In terms of assembly, homohexamer. Forms an RuvA(8)-RuvB(12)-Holliday junction (HJ) complex. HJ DNA is sandwiched between 2 RuvA tetramers; dsDNA enters through RuvA and exits via RuvB. An RuvB hexamer assembles on each DNA strand where it exits the tetramer. Each RuvB hexamer is contacted by two RuvA subunits (via domain III) on 2 adjacent RuvB subunits; this complex drives branch migration. In the full resolvosome a probable DNA-RuvA(4)-RuvB(12)-RuvC(2) complex forms which resolves the HJ.

The protein resides in the cytoplasm. The catalysed reaction is ATP + H2O = ADP + phosphate + H(+). In terms of biological role, the RuvA-RuvB-RuvC complex processes Holliday junction (HJ) DNA during genetic recombination and DNA repair, while the RuvA-RuvB complex plays an important role in the rescue of blocked DNA replication forks via replication fork reversal (RFR). RuvA specifically binds to HJ cruciform DNA, conferring on it an open structure. The RuvB hexamer acts as an ATP-dependent pump, pulling dsDNA into and through the RuvAB complex. RuvB forms 2 homohexamers on either side of HJ DNA bound by 1 or 2 RuvA tetramers; 4 subunits per hexamer contact DNA at a time. Coordinated motions by a converter formed by DNA-disengaged RuvB subunits stimulates ATP hydrolysis and nucleotide exchange. Immobilization of the converter enables RuvB to convert the ATP-contained energy into a lever motion, pulling 2 nucleotides of DNA out of the RuvA tetramer per ATP hydrolyzed, thus driving DNA branch migration. The RuvB motors rotate together with the DNA substrate, which together with the progressing nucleotide cycle form the mechanistic basis for DNA recombination by continuous HJ branch migration. Branch migration allows RuvC to scan DNA until it finds its consensus sequence, where it cleaves and resolves cruciform DNA. This chain is Holliday junction branch migration complex subunit RuvB, found in Stenotrophomonas maltophilia (strain K279a).